Consider the following 184-residue polypeptide: MSWRSESIWIELRTGSRKTSNFFWAFILFLGSLGFLLVGTSSYLGRNVISLFPSQQIIFFPQGIVMSFYGIAGLFISCYLWCTILWNVGSGYDLFDRKEGIVRIFRWGFPGKSRRIFLRFLMKDIQSIRIEVKEGISARRVLYMEIRGQGAIPLIRTDENFTTREIEQKAAELAYFLRVPIEVF.

2 consecutive transmembrane segments (helical) span residues 22 to 42 and 57 to 77; these read FFWAFILFLGSLGFLLVGTSS and IIFFPQGIVMSFYGIAGLFIS.

The protein belongs to the Ycf4 family.

The protein resides in the plastid. The protein localises to the chloroplast thylakoid membrane. Its function is as follows. Seems to be required for the assembly of the photosystem I complex. The chain is Photosystem I assembly protein Ycf4 from Aethionema cordifolium (Lebanon stonecress).